The following is a 390-amino-acid chain: Phosphopentomutase (390 aa).

Positions 12, 284, 289, 325, 326, and 337 each coordinate Mn(2+).

Belongs to the phosphopentomutase family. The cofactor is Mn(2+).

It is found in the cytoplasm. The catalysed reaction is 2-deoxy-alpha-D-ribose 1-phosphate = 2-deoxy-D-ribose 5-phosphate. The enzyme catalyses alpha-D-ribose 1-phosphate = D-ribose 5-phosphate. It functions in the pathway carbohydrate degradation; 2-deoxy-D-ribose 1-phosphate degradation; D-glyceraldehyde 3-phosphate and acetaldehyde from 2-deoxy-alpha-D-ribose 1-phosphate: step 1/2. Functionally, isomerase that catalyzes the conversion of deoxy-ribose 1-phosphate (dRib-1-P) and ribose 1-phosphate (Rib-1-P) to deoxy-ribose 5-phosphate (dRib-5-P) and ribose 5-phosphate (Rib-5-P), respectively. In Macrococcus caseolyticus (strain JCSC5402) (Macrococcoides caseolyticum), this protein is Phosphopentomutase.